A 199-amino-acid chain; its full sequence is Probable V-type proton ATPase 20 kDa proteolipid subunit (199 aa).

Residues 1–3 (MSL) lie on the Vacuolar side of the membrane. The chain crosses the membrane as a helical span at residues 4 to 24 (FSTSLWTTTVMSIIVGLYMLF). At 25-46 (HNSGESFDFGSFLLDTSPYTWG) the chain is on the cytoplasmic side. The helical transmembrane segment at 47–67 (LLGIASCVAFGIIGAAWGIFI) threads the bilayer. The Vacuolar segment spans residues 68 to 86 (CGTSILGGAVKAPRIKTKN). A helical membrane pass occupies residues 87–107 (LISIIFCEVVAIYSLIIAIVF). Residues 108 to 130 (SAKINDINPAGFYTKSHYYTGFA) are Cytoplasmic-facing. Residues 131–151 (LFWGGITVGLCNLICGVCVGI) traverse the membrane as a helical segment. Topologically, residues 152-170 (TGSSAALADAQDASLFVKV) are vacuolar. The chain crosses the membrane as a helical span at residues 171-191 (LVVEIFGSVLGLFGLIVGLLI). At 192-199 (GGKASDFS) the chain is on the cytoplasmic side.

The protein belongs to the V-ATPase proteolipid subunit family. In terms of assembly, V-ATPase is a heteromultimeric enzyme composed of a peripheral catalytic V1 complex (components A to H) attached to an integral membrane V0 proton pore complex (components: a, c, c', c'', d, e, f and VOA1). The decameric c-ring forms the proton-conducting pore, and is composed of eight proteolipid subunits c, one subunit c' and one subunit c''.

Its subcellular location is the vacuole membrane. Its function is as follows. Proton-conducting pore forming subunit of the V0 complex of vacuolar(H+)-ATPase (V-ATPase), a multisubunit enzyme composed of a peripheral complex (V1) that hydrolyzes ATP and a membrane integral complex (V0) that translocates protons. V-ATPase is responsible for acidifying and maintaining the pH of intracellular compartments. The polypeptide is Probable V-type proton ATPase 20 kDa proteolipid subunit (vma16) (Schizosaccharomyces pombe (strain 972 / ATCC 24843) (Fission yeast)).